The primary structure comprises 185 residues: Threonylcarbamoyl-AMP synthase (185 aa).

Positions 4-185 (SWRVQQAARE…LATGKVVRPS (182 aa)) constitute a YrdC-like domain.

It belongs to the SUA5 family. TsaC subfamily.

It is found in the cytoplasm. The enzyme catalyses L-threonine + hydrogencarbonate + ATP = L-threonylcarbamoyladenylate + diphosphate + H2O. Required for the formation of a threonylcarbamoyl group on adenosine at position 37 (t(6)A37) in tRNAs that read codons beginning with adenine. Catalyzes the conversion of L-threonine, HCO(3)(-)/CO(2) and ATP to give threonylcarbamoyl-AMP (TC-AMP) as the acyladenylate intermediate, with the release of diphosphate. The protein is Threonylcarbamoyl-AMP synthase of Pseudomonas fluorescens (strain ATCC BAA-477 / NRRL B-23932 / Pf-5).